Reading from the N-terminus, the 360-residue chain is MGSSFGHLFRISTFGESHGGGVGVIVDGCPPRLAIDIEAVQAELDRRKPGQSKITTPRKEDDRVEALSGLLDGVSLGTPIAMVVRNKDQRPGDYKEMQVAFRPSHADATYQSKYGIQARSGGGRASARETIGRVAAGAIAKQMLRQLHGTEVLAWVKRIHTLEANIDPAVPTLDAVESNIVRCPDAAMAEQMIERIESIGRDGDSCGGVIECVVRRPPTGLGMPVFDKLEADLAKAVMSLPATKGFEIGSGFAGTTLLGSQHNDAFLPTSDGSLHTATNNSGGIQGGISNGEPIVLRVAFKPTATIRKEQQTINASGEATTLAAKGRHDPCVLPRAVPMVEAMVALVLADHALRQRGQCG.

Arg-47 is an NADP(+) binding site. Residues 124–126 (RAS), Gly-286, 301–305 (KPTAT), and Arg-327 contribute to the FMN site.

The protein belongs to the chorismate synthase family. In terms of assembly, homotetramer. It depends on FMNH2 as a cofactor.

It catalyses the reaction 5-O-(1-carboxyvinyl)-3-phosphoshikimate = chorismate + phosphate. It participates in metabolic intermediate biosynthesis; chorismate biosynthesis; chorismate from D-erythrose 4-phosphate and phosphoenolpyruvate: step 7/7. Functionally, catalyzes the anti-1,4-elimination of the C-3 phosphate and the C-6 proR hydrogen from 5-enolpyruvylshikimate-3-phosphate (EPSP) to yield chorismate, which is the branch point compound that serves as the starting substrate for the three terminal pathways of aromatic amino acid biosynthesis. This reaction introduces a second double bond into the aromatic ring system. This is Chorismate synthase from Synechococcus sp. (strain RCC307).